Reading from the N-terminus, the 88-residue chain is Small ribosomal subunit protein uS17 (88 aa).

This sequence belongs to the universal ribosomal protein uS17 family. As to quaternary structure, part of the 30S ribosomal subunit.

One of the primary rRNA binding proteins, it binds specifically to the 5'-end of 16S ribosomal RNA. In Teredinibacter turnerae (strain ATCC 39867 / T7901), this protein is Small ribosomal subunit protein uS17.